Here is a 248-residue protein sequence, read N- to C-terminus: MYKLVLIRHGESQWNLENRFTGWHDVDLTDTGVAQAKTAGQLLKDAGFTFDQAYTSVLLRAIKTLNIALEEMGQHYLPVERHWRLNERHYGALTGLDKAETAAKHGEEQVKIWRRSFDIPPPAVEDDSEHFPGHDPRYNNVDADILPRGESLKLTIERVLPYWHDVIRPDIQAGKRVIIAAHGNSLRALVKYLDGMSDEEVLGLNIPTGVPLVYELDENLKPISKEYLGDADAIKAMMDAVAKQGQAK.

Residues 8 to 15 (RHGESQWN), 21 to 22 (TG), R60, 87 to 90 (ERHY), K98, 114 to 115 (RR), and 183 to 184 (GN) contribute to the substrate site. The active-site Tele-phosphohistidine intermediate is the H9. E87 (proton donor/acceptor) is an active-site residue.

It belongs to the phosphoglycerate mutase family. BPG-dependent PGAM subfamily. As to quaternary structure, homodimer.

The catalysed reaction is (2R)-2-phosphoglycerate = (2R)-3-phosphoglycerate. The protein operates within carbohydrate degradation; glycolysis; pyruvate from D-glyceraldehyde 3-phosphate: step 3/5. In terms of biological role, catalyzes the interconversion of 2-phosphoglycerate and 3-phosphoglycerate. In Alteromonas mediterranea (strain DSM 17117 / CIP 110805 / LMG 28347 / Deep ecotype), this protein is 2,3-bisphosphoglycerate-dependent phosphoglycerate mutase.